The sequence spans 361 residues: Phenylalanine--tRNA ligase alpha subunit (361 aa).

E260 serves as a coordination point for Mg(2+).

The protein belongs to the class-II aminoacyl-tRNA synthetase family. Phe-tRNA synthetase alpha subunit type 1 subfamily. Tetramer of two alpha and two beta subunits. Mg(2+) is required as a cofactor.

The protein localises to the cytoplasm. It carries out the reaction tRNA(Phe) + L-phenylalanine + ATP = L-phenylalanyl-tRNA(Phe) + AMP + diphosphate + H(+). In Chelativorans sp. (strain BNC1), this protein is Phenylalanine--tRNA ligase alpha subunit.